Reading from the N-terminus, the 733-residue chain is MSKNQSVSASEDEKEILNNNAEGHKPQRLFDQEPDLTEEALTKFENLDDCIYANKRIGTFKNNDFMECDCYEEFSDGVNHACDEDSDCINRLTLIECVNDLCSSCGNDCQNQRFQKKQYAPIAIFKTKHKGYGVRAEQDIEANQFIYEYKGEVIEEMEFRDRLIDYDQRHFKHFYFMMLQNGEFIDATIKGSLARFCNHSCSPNAYVNKWVVKDKLRMGIFAQRKILKGEEITFDYNVDRYGAQAQKCYCEEPNCIGFLGGKTQTDAASLLPQNIADALGVTVSMEKKWLKLKKLSGEPIIKNENENINIEFLQSLEVQPIDSPVDVTKIMSVLLQQDNKIIASKLLKRLFTIDDDSLRHQAIKLHGYTCFSKMLKLFITEQPQVDGKGNETEEDDIKFIKGILDFLLELPKTTRNGIESSQIDNVVKTLPAKFPFLKPNCDELLEKWSKFETYKRITKKDINVAASKMIDLRRVRLPPGWEIIHENGRPLYYNAEQKTKLHYPPSGSSKVFSSRSNTQVNSPSSSGIPKTPGALDSKKHKLSDEEYERKKQKRLEYERIALERAKQEELESLKQKLKLENERKSVLEDIIAEANKQKELQKEEAKKLVEAKEAKRLKRKTVSQSQRLEHNWNKFFASFVPNLIKKNPQSKQFDHENIKQCAKDIVKILTTKELKKDSSRAPPDDLTKGKRHKVKEFINSYMDKIILKKKQKKALALSSASTRMSSPPPSTSS.

The disordered stretch occupies residues 1–32; sequence MSKNQSVSASEDEKEILNNNAEGHKPQRLFDQ. Position 10 is a phosphoserine (Ser-10). A compositionally biased stretch (basic and acidic residues) spans 22–31; it reads EGHKPQRLFD. Residues 63–118 form the AWS domain; that stretch reads NDFMECDCYEEFSDGVNHACDEDSDCINRLTLIECVNDLCSSCGNDCQNQRFQKKQ. Residues 120–237 enclose the SET domain; sequence APIAIFKTKH…KGEEITFDYN (118 aa). Residues 244 to 260 enclose the Post-SET domain; that stretch reads QAQKCYCEEPNCIGFLG. One can recognise a WW domain in the interval 475 to 507; sequence VRLPPGWEIIHENGRPLYYNAEQKTKLHYPPSG. Disordered stretches follow at residues 504–548 and 672–692; these read PPSG…EEYE and KELK…GKRH. Positions 506-528 are enriched in polar residues; sequence SGSSKVFSSRSNTQVNSPSSSGI. Position 522 is a phosphoserine (Ser-522). Residues 548-630 are a coiled coil; the sequence is ERKKQKRLEY…TVSQSQRLEH (83 aa). Residues 619-718 are binding to RNA polymerase II CTD; the sequence is RKTVSQSQRL…KKQKKALALS (100 aa). Residues 672-688 show a composition bias toward basic and acidic residues; that stretch reads KELKKDSSRAPPDDLTK.

Belongs to the class V-like SAM-binding methyltransferase superfamily. Histone-lysine methyltransferase family. SET2 subfamily. In terms of assembly, interacts with the RNA polymerase II hyperphosphorylated CTD. Interacts with CYC8.

The protein resides in the nucleus. It localises to the chromosome. The enzyme catalyses L-lysyl(36)-[histone H3] + 3 S-adenosyl-L-methionine = N(6),N(6),N(6)-trimethyl-L-lysyl(36)-[histone H3] + 3 S-adenosyl-L-homocysteine + 3 H(+). Functionally, histone methyltransferase that trimethylates histone H3 'Lys-36' forming H3K36me3. Involved in transcription elongation as well as in transcription repression. The methyltransferase activity requires the recruitment to the RNA polymerase II, which is CTK1 dependent. This is Histone-lysine N-methyltransferase, H3 lysine-36 specific (SET2) from Saccharomyces cerevisiae (strain ATCC 204508 / S288c) (Baker's yeast).